We begin with the raw amino-acid sequence, 482 residues long: MVSKPFQRPFSLATRLTFFISLATIAAFFAFAWIMIHSVKVHFAEQDINDLKEISATLERVLNHPDETQARRLMTLEDIVSGYSNVLISLADSHGKTVYHSPGAPDIREFARDAIPDKDARGGEVFLLSGPTMMMPGHGHGHMEHSNWRMISLPVGPLVDGKPIYTLYIALSIDFHLHYINDLMNKLIMTASVISILIVFIVLLAVHKGHAPIRSVSRQIQNITSKDLDVRLDPQTVPIELEQLVLSFNHMIERIEDVFTRQSNFSADIAHEIRTPITNLITQTEIALSQSRSQKELEDVLYSNLEELTRMAKMVSDMLFLAQADNNQLIPEKKMLNLADEVGKVFDFFEALAEDRGVELQFVGDECQVAGDPLMLRRALSNLLSNALRYTPPGEAIVVRCQTVDHLVQVIVENPGTPIAPEHLPRLFDRFYRVDPSRQRKGEGSGIGLAIVKSIVVAHKGTVAVTSNARGTRFVIVLPERG.

At 1–15 (MVSKPFQRPFSLATR) the chain is on the cytoplasmic side. The chain crosses the membrane as a helical span at residues 16–36 (LTFFISLATIAAFFAFAWIMI). At 37 to 186 (HSVKVHFAEQ…LHYINDLMNK (150 aa)) the chain is on the periplasmic side. A helical transmembrane segment spans residues 187–207 (LIMTASVISILIVFIVLLAVH). The region spanning 207–260 (HKGHAPIRSVSRQIQNITSKDLDVRLDPQTVPIELEQLVLSFNHMIERIEDVFT) is the HAMP domain. The Cytoplasmic portion of the chain corresponds to 208–482 (KGHAPIRSVS…RFVIVLPERG (275 aa)). One can recognise a Histidine kinase domain in the interval 268–482 (DIAHEIRTPI…RFVIVLPERG (215 aa)). His271 is modified (phosphohistidine; by autocatalysis).

In terms of processing, autophosphorylated.

It is found in the cell inner membrane. The enzyme catalyses ATP + protein L-histidine = ADP + protein N-phospho-L-histidine.. In terms of biological role, member of the two-component regulatory system CusS/CusR involved in response to copper and silver. Acts as a copper/silver ion sensor. Activates CusR by phosphorylation. This chain is Sensor histidine kinase CusS (cusS), found in Escherichia coli O157:H7.